We begin with the raw amino-acid sequence, 551 residues long: L-lactate permease (551 aa).

12 consecutive transmembrane segments (helical) span residues 13 to 33, 37 to 57, 69 to 89, 131 to 151, 159 to 179, 194 to 214, 244 to 264, 306 to 326, 366 to 386, 405 to 425, 438 to 458, and 530 to 550; these read NIWL…FALI, LKGY…ALLF, VVYG…AAVF, GAAG…GLGF, LCLI…PILV, MVGR…MAIM, FIGP…CLTL, FLFL…ALFA, FDWF…SIVW, LALP…SNYS, TGSA…FLTG, and IFTC…TWMI.

Belongs to the lactate permease family.

It is found in the cell inner membrane. The catalysed reaction is (S)-lactate(in) + H(+)(in) = (S)-lactate(out) + H(+)(out). The enzyme catalyses (R)-lactate(in) + H(+)(in) = (R)-lactate(out) + H(+)(out). It catalyses the reaction glycolate(in) + H(+)(in) = glycolate(out) + H(+)(out). In terms of biological role, uptake of L-lactate across the membrane. Can also transport D-lactate and glycolate. Seems to be driven by a proton motive force. The chain is L-lactate permease (lldP) from Salmonella typhimurium (strain LT2 / SGSC1412 / ATCC 700720).